The following is a 198-amino-acid chain: Recombination protein RecR (198 aa).

Residues 57-72 (CSVCGHITDQDPCAIC) form a C4-type zinc finger. The region spanning 80-175 (SLICVVQDPK…RTTRIAHGLP (96 aa)) is the Toprim domain.

The protein belongs to the RecR family.

May play a role in DNA repair. It seems to be involved in an RecBC-independent recombinational process of DNA repair. It may act with RecF and RecO. The polypeptide is Recombination protein RecR (Oceanobacillus iheyensis (strain DSM 14371 / CIP 107618 / JCM 11309 / KCTC 3954 / HTE831)).